The chain runs to 208 residues: MGVTVVSHPLVQHKLTIMRKKETSTASFRRLLKEISLLLCYEVTRNLELTTMSIETPLMPMEAPVLEGKKLVFASILRAGNGLLEGMLDLVPAARVAHIGLYRDHDTLQPIEYYFKAPEDIVNRLVIVVDPMLATANSAIAAIDKLKERGATNIRFLCLLAAPEGIERFTKAHPDVEVFTASIDECLDEKGYIVPGLGDAGDRMYGTK.

5-phospho-alpha-D-ribose 1-diphosphate contacts are provided by residues R78, R103, and 130 to 138; that span reads DPMLATANS. Uracil contacts are provided by residues I193 and 198 to 200; that span reads GDA. Position 199 (D199) interacts with 5-phospho-alpha-D-ribose 1-diphosphate.

It belongs to the UPRTase family. The cofactor is Mg(2+).

The catalysed reaction is UMP + diphosphate = 5-phospho-alpha-D-ribose 1-diphosphate + uracil. Its pathway is pyrimidine metabolism; UMP biosynthesis via salvage pathway; UMP from uracil: step 1/1. Its activity is regulated as follows. Allosterically activated by GTP. Its function is as follows. Catalyzes the conversion of uracil and 5-phospho-alpha-D-ribose 1-diphosphate (PRPP) to UMP and diphosphate. This chain is Uracil phosphoribosyltransferase, found in Brucella melitensis biotype 2 (strain ATCC 23457).